We begin with the raw amino-acid sequence, 568 residues long: PWWP domain-containing protein2 (568 aa).

Positions 1-19 (MTEIKDSSVKDENPGKQEE) are enriched in basic and acidic residues. Disordered stretches follow at residues 1 to 126 (MTEI…YKPG), 213 to 340 (QSTP…DVAK), and 465 to 568 (IASL…TGQK). Polar residues predominate over residues 29 to 46 (MSTATNNSKNIETTSSNG). Composition is skewed to basic and acidic residues over residues 48 to 88 (EDIK…KTIE) and 100 to 122 (KSQKSEKSNGNARKETKQSERVN). Residues 125 to 189 (PGMRVLTKMS…SDSLTPLTSE (65 aa)) form the PWWP domain. Low complexity predominate over residues 214–228 (STPDLDSLSVPSSES). Positions 229 to 249 (EVSEEESDQEMSEPSPIEEDY) are enriched in acidic residues. The segment covering 255–266 (RRITRKGTKKKT) has biased composition (basic residues). Residues 281–292 (LNASSNVSSNPA) show a composition bias toward polar residues. Acidic residues predominate over residues 325-336 (KEEEEGSVANEE). 2 stretches are compositionally biased toward basic and acidic residues: residues 489–500 (KQNEDNEDKVKA) and 514–541 (DASKDMISEEKSSKDADNSLEVAGKDFA).

This Schizosaccharomyces pombe (strain 972 / ATCC 24843) (Fission yeast) protein is PWWP domain-containing protein2 (pdp2).